The chain runs to 81 residues: uncharacterized protein (81 aa).

This is an uncharacterized protein from Caenorhabditis elegans.